Consider the following 350-residue polypeptide: Protein FAM118B (350 aa).

Alanine 2 carries the post-translational modification N-acetylalanine. Position 9 is a phosphoserine (serine 9).

The protein belongs to the FAM118 family.

The protein localises to the nucleus. It is found in the cajal body. Its function is as follows. May play a role in Cajal bodies formation. In Macaca fascicularis (Crab-eating macaque), this protein is Protein FAM118B (FAM118B).